We begin with the raw amino-acid sequence, 63 residues long: Large ribosomal subunit protein bL32 (63 aa).

This sequence belongs to the bacterial ribosomal protein bL32 family.

The sequence is that of Large ribosomal subunit protein bL32 from Lactobacillus delbrueckii subsp. bulgaricus (strain ATCC 11842 / DSM 20081 / BCRC 10696 / JCM 1002 / NBRC 13953 / NCIMB 11778 / NCTC 12712 / WDCM 00102 / Lb 14).